The following is a 280-amino-acid chain: Keratin, type I cytoskeletal 47 kDa (280 aa).

The interval 1–81 (MSFRSSSSYS…SSSFSSFGGN (81 aa)) is head. Positions 82–117 (DKQTMQNLNDRLASYLEKVRALEAANADLELKIREW) are coil 1A. The 199-residue stretch at 82–280 (DKQTMQNLND…RDAELWFNQK (199 aa)) folds into the IF rod domain. Positions 118–139 (YEKQKGSGIGAASKDFSKYFEI) are linker 1. Residues 140-231 (ISDLRNKILF…KNHEEEMSIA (92 aa)) form a coil 1B region. The linker 12 stretch occupies residues 232 to 254 (KGSAAGQVTVEMDAAPGVDLNKI). A coil 2 region spans residues 255-280 (LSDMRADYETLAEKNRRDAELWFNQK).

The protein belongs to the intermediate filament family. In terms of assembly, heterotetramer of two type I and two type II keratins.

This is Keratin, type I cytoskeletal 47 kDa (xk81b1) from Xenopus laevis (African clawed frog).